The following is a 379-amino-acid chain: MQNSESIIKNIKNSSYLIDKEFLVWPENAFIGDKNIELIEKWNLKSYIKERKNFFSDDSVKKEYEEIHKKFNEEAISSYHVIISNLEEIYENCKRNKKIYYQDIMPTVKKVIEFYKKQKKIFIKYFRIPKLSANYHIIHSVNTAILTVALGNEMGLNNYKTVELCSIALLHKIGFLFIPSKISEKKEALTEEELEIIKKYPIISYKIASTSNLSRSICLTLLTHKENLDGTGYPKGLTSENISIESNIIGAASAYSAIILDKAYKKSFNSGASIIELIKDADKKFDKRVLKLIINAISSCPLDFIVELNDNSIAKIVDIDESNPNLPYINYIIKNGKVIDKNEQSSVQSIPNTNTGIKKILNQNEIELIKNKYSLIDII.

One can recognise an HD-GYP domain in the interval 114-310 (FYKKQKKIFI…PLDFIVELND (197 aa)).

Requires Mn(2+) as cofactor.

It carries out the reaction 3',3'-c-di-GMP + 2 H2O = 2 GMP + 2 H(+). Functionally, phosphodiesterase (PDE) that catalyzes the hydrolysis of cyclic diguanylate (c-di-GMP) to GMP. This chain is Cyclic di-GMP phosphodiesterase PdeB, found in Borreliella burgdorferi (strain ATCC 35210 / DSM 4680 / CIP 102532 / B31) (Borrelia burgdorferi).